A 519-amino-acid chain; its full sequence is MGLQRFSFFVTLALVARSLAAIGPVASLVVANAPVSPDGFLRDAIVVNGVVPSPLITGKKGDRFQLNVDDTLTNHSMLKSTSIHWHGFFQAGTNWADGPAFVNQCPIASGHSFLYDFHVPDQAGTFWYHSHLSTQYCDGLRGPFVVYDPKDPHASRYDVDNESTVITLTDWYHTAARLGPRFPLGADATLINGLGRSASTPTAALAVINVQHGKRYRFRLVSISCDPNYTFSIDGHNLTVIEVDGINSQPLLVDSIQIFAAQRYSFVLNANQTVGNYWVRANPNFGTVGFAGGINSAILRYQGAPVAEPTTTQTTSVIPLIETNLHPLARMPVPGSPTPGGVDKALNLAFNFNGTNFFINNATFTPPTVPVLLQILSGAQTAQDLLPAGSVYPLPAHSTIEITLPATALAPGAPHPFHLHGHAFAVVRSAGSTTYNYNDPIFRDVVSTGTPAAGDNVTIRFQTDNPGPWFLHCHIDFHLDAGFAIVFAEDVADVKAANPVPKAWSDLCPIYDGLSEANQ.

Residues 1–20 (MGLQRFSFFVTLALVARSLA) form the signal peptide. 2 Plastocyanin-like domains span residues 22 to 147 (IGPV…FVVY) and 159 to 301 (VDNE…ILRY). The N-linked (GlcNAc...) asparagine glycan is linked to Asn-74. 4 residues coordinate Cu cation: His-84, His-86, His-129, and His-131. 2 disulfides stabilise this stretch: Cys-105-Cys-508 and Cys-137-Cys-225. N-linked (GlcNAc...) asparagine glycosylation is found at Asn-161, Asn-228, Asn-237, Asn-271, Asn-353, and Asn-361. Positions 368–490 (TVPVLLQILS…AGFAIVFAED (123 aa)) constitute a Plastocyanin-like 3 domain. Residues His-415, His-418, and His-420 each contribute to the Cu cation site. A glycan (N-linked (GlcNAc...) asparagine) is linked at Asn-456. 4 residues coordinate Cu cation: His-472, Cys-473, His-474, and His-478.

The protein belongs to the multicopper oxidase family. The cofactor is Cu cation.

The protein localises to the secreted. It catalyses the reaction 4 hydroquinone + O2 = 4 benzosemiquinone + 2 H2O. Functionally, lignin degradation and detoxification of lignin-derived products. The chain is Laccase-2 (LCC2) from Trametes versicolor (White-rot fungus).